The chain runs to 145 residues: UPF0735 ACT domain-containing protein CLL_A2896 (145 aa).

Residues 69–144 (TFNLIVKDQT…YVEKIEFVAM (76 aa)) enclose the ACT domain.

Belongs to the UPF0735 family.

The polypeptide is UPF0735 ACT domain-containing protein CLL_A2896 (Clostridium botulinum (strain Eklund 17B / Type B)).